The chain runs to 92 residues: Signal recognition particle 19 kDa protein (92 aa).

Belongs to the SRP19 family. As to quaternary structure, part of the signal recognition particle protein translocation system, which is composed of SRP and FtsY. Archaeal SRP consists of a 7S RNA molecule of 300 nucleotides and two protein subunits: SRP54 and SRP19.

The protein resides in the cytoplasm. Involved in targeting and insertion of nascent membrane proteins into the cytoplasmic membrane. Binds directly to 7S RNA and mediates binding of the 54 kDa subunit of the SRP. The sequence is that of Signal recognition particle 19 kDa protein from Halorubrum lacusprofundi (strain ATCC 49239 / DSM 5036 / JCM 8891 / ACAM 34).